A 205-amino-acid polypeptide reads, in one-letter code: GTP cyclohydrolase-2 (205 aa).

49 to 53 (RIHSE) lines the GTP pocket. Cys54, Cys65, and Cys67 together coordinate Zn(2+). Residues Gln70, 92–94 (EGR), and Thr114 each bind GTP. Asp126 serves as the catalytic Proton acceptor. Arg128 serves as the catalytic Nucleophile. 2 residues coordinate GTP: Thr149 and Lys154.

The protein belongs to the GTP cyclohydrolase II family. It depends on Zn(2+) as a cofactor.

It carries out the reaction GTP + 4 H2O = 2,5-diamino-6-hydroxy-4-(5-phosphoribosylamino)-pyrimidine + formate + 2 phosphate + 3 H(+). It functions in the pathway cofactor biosynthesis; riboflavin biosynthesis; 5-amino-6-(D-ribitylamino)uracil from GTP: step 1/4. In terms of biological role, catalyzes the conversion of GTP to 2,5-diamino-6-ribosylamino-4(3H)-pyrimidinone 5'-phosphate (DARP), formate and pyrophosphate. The sequence is that of GTP cyclohydrolase-2 from Shewanella denitrificans (strain OS217 / ATCC BAA-1090 / DSM 15013).